We begin with the raw amino-acid sequence, 487 residues long: Probable cytochrome P450 513B1 (487 aa).

The chain crosses the membrane as a helical span at residues 1-18; it reads MNLLVLSVILAIIIYLIF. Cys-433 contacts heme.

This sequence belongs to the cytochrome P450 family. The cofactor is heme.

Its subcellular location is the membrane. The sequence is that of Probable cytochrome P450 513B1 (cyp513B1) from Dictyostelium discoideum (Social amoeba).